A 274-amino-acid chain; its full sequence is Hydroxyethylthiazole kinase (274 aa).

Residue Met49 coordinates substrate. ATP-binding residues include Arg125 and Thr173. Gly200 contributes to the substrate binding site.

It belongs to the Thz kinase family. The cofactor is Mg(2+).

The catalysed reaction is 5-(2-hydroxyethyl)-4-methylthiazole + ATP = 4-methyl-5-(2-phosphooxyethyl)-thiazole + ADP + H(+). It participates in cofactor biosynthesis; thiamine diphosphate biosynthesis; 4-methyl-5-(2-phosphoethyl)-thiazole from 5-(2-hydroxyethyl)-4-methylthiazole: step 1/1. Functionally, catalyzes the phosphorylation of the hydroxyl group of 4-methyl-5-beta-hydroxyethylthiazole (THZ). The sequence is that of Hydroxyethylthiazole kinase from Desulfosudis oleivorans (strain DSM 6200 / JCM 39069 / Hxd3) (Desulfococcus oleovorans).